We begin with the raw amino-acid sequence, 195 residues long: Cytochrome c oxidase assembly protein CtaG (195 aa).

Residues 1–7 (MSGGKPR) lie on the Cytoplasmic side of the membrane. A helical; Signal-anchor for type II membrane protein membrane pass occupies residues 8 to 30 (SNTRTVAMLAGVVVLMGALSWAA). Over 31-195 (VPFYSWFCKV…LDAKTEPTVN (165 aa)) the chain is Periplasmic.

It belongs to the COX11/CtaG family.

It localises to the cell inner membrane. Functionally, exerts its effect at some terminal stage of cytochrome c oxidase synthesis, probably by being involved in the insertion of the copper B into subunit I. The protein is Cytochrome c oxidase assembly protein CtaG of Paracoccus denitrificans (strain Pd 1222).